Consider the following 113-residue polypeptide: Large ribosomal subunit protein uL22 (113 aa).

It belongs to the universal ribosomal protein uL22 family. Part of the 50S ribosomal subunit.

This protein binds specifically to 23S rRNA; its binding is stimulated by other ribosomal proteins, e.g. L4, L17, and L20. It is important during the early stages of 50S assembly. It makes multiple contacts with different domains of the 23S rRNA in the assembled 50S subunit and ribosome. In terms of biological role, the globular domain of the protein is located near the polypeptide exit tunnel on the outside of the subunit, while an extended beta-hairpin is found that lines the wall of the exit tunnel in the center of the 70S ribosome. In Oceanobacillus iheyensis (strain DSM 14371 / CIP 107618 / JCM 11309 / KCTC 3954 / HTE831), this protein is Large ribosomal subunit protein uL22.